Consider the following 443-residue polypeptide: Probable glycine dehydrogenase (decarboxylating) subunit 1 (443 aa).

Belongs to the GcvP family. N-terminal subunit subfamily. As to quaternary structure, the glycine cleavage system is composed of four proteins: P, T, L and H. In this organism, the P 'protein' is a heterodimer of two subunits.

The enzyme catalyses N(6)-[(R)-lipoyl]-L-lysyl-[glycine-cleavage complex H protein] + glycine + H(+) = N(6)-[(R)-S(8)-aminomethyldihydrolipoyl]-L-lysyl-[glycine-cleavage complex H protein] + CO2. Its function is as follows. The glycine cleavage system catalyzes the degradation of glycine. The P protein binds the alpha-amino group of glycine through its pyridoxal phosphate cofactor; CO(2) is released and the remaining methylamine moiety is then transferred to the lipoamide cofactor of the H protein. In Chlorobium limicola (strain DSM 245 / NBRC 103803 / 6330), this protein is Probable glycine dehydrogenase (decarboxylating) subunit 1.